The sequence spans 131 residues: Phosphoribosyl-AMP cyclohydrolase (131 aa).

Asp-78 contributes to the Mg(2+) binding site. Cys-79 is a Zn(2+) binding site. Residues Asp-80 and Asp-82 each contribute to the Mg(2+) site. Cys-96 and Cys-103 together coordinate Zn(2+).

Belongs to the PRA-CH family. As to quaternary structure, homodimer. Mg(2+) is required as a cofactor. It depends on Zn(2+) as a cofactor.

Its subcellular location is the cytoplasm. The catalysed reaction is 1-(5-phospho-beta-D-ribosyl)-5'-AMP + H2O = 1-(5-phospho-beta-D-ribosyl)-5-[(5-phospho-beta-D-ribosylamino)methylideneamino]imidazole-4-carboxamide. It functions in the pathway amino-acid biosynthesis; L-histidine biosynthesis; L-histidine from 5-phospho-alpha-D-ribose 1-diphosphate: step 3/9. Functionally, catalyzes the hydrolysis of the adenine ring of phosphoribosyl-AMP. The chain is Phosphoribosyl-AMP cyclohydrolase from Thioalkalivibrio sulfidiphilus (strain HL-EbGR7).